The primary structure comprises 256 residues: Trypsin, alkaline A (256 aa).

Positions 1 to 17 (MRLFLALLALGFAAVAA) are cleaved as a signal peptide. Positions 18 to 24 (VPAYPQR) are cleaved as a propeptide — activation peptide. The Peptidase S1 domain maps to 25-256 (IVGGSTTTIQ…RFANWIRNNS (232 aa)). Residues Cys55 and Cys71 are joined by a disulfide bond. Catalysis depends on charge relay system residues His70 and Asp115. 2 cysteine pairs are disulfide-bonded: Cys180–Cys197 and Cys209–Cys233. The active-site Charge relay system is the Ser213.

Belongs to the peptidase S1 family. In terms of tissue distribution, midgut.

It localises to the secreted. The protein resides in the extracellular space. It carries out the reaction Preferential cleavage: Arg-|-Xaa, Lys-|-Xaa.. The chain is Trypsin, alkaline A from Manduca sexta (Tobacco hawkmoth).